We begin with the raw amino-acid sequence, 316 residues long: Retron Ec73 putative ribosyltransferase/DNA-binding protein (316 aa).

Its function is as follows. Possible ribosyltransferase/DNA-binding component of antiviral defense system retron Ec73, composed of a non-coding RNA (ncRNA) followed by this protein then a reverse transcriptase (RT). Expression of this retron confers protection against bacteriophages SECphi4, SECphi6, SECphi27 and P1. At multiplicity of infection (MOI) of 0.02 cultures grow normally when infected with SECphi4 without collapsing, at MOI 2 cultures enter growth stasis. The polypeptide is Retron Ec73 putative ribosyltransferase/DNA-binding protein (Escherichia coli).